The following is a 478-amino-acid chain: Odorant receptor coreceptor (478 aa).

The Cytoplasmic portion of the chain corresponds to 1–43; the sequence is MMKMKQQGLVADLLPNIRVMKTFGHFVFNYYNDNSSKYLHKVY. The helical transmembrane segment at 44-64 threads the bilayer; sequence CCVNLFMLLLQFGLCAVNLIV. Residues 65-73 are Extracellular-facing; that stretch reads ESADVDDLT. A helical membrane pass occupies residues 74–94; the sequence is ANTITLLFFTHSIVKICYFAI. Topologically, residues 95-133 are cytoplasmic; that stretch reads RSKYFYRTWAIWNNPNSHPLFAESNARYHAIALKKMRLL. Residues 134–154 form a helical membrane-spanning segment; that stretch reads LFLVGGTTMLAAVAWTVLTFF. The Extracellular portion of the chain corresponds to 155-190; the sequence is EHPIRKIVDPVTNETEIIELPQLLIRSFYPFDAGKG. N167 carries N-linked (GlcNAc...) asparagine glycosylation. Residues 191 to 211 traverse the membrane as a helical segment; that stretch reads ITHVLVLVYQFYWVLFMLIDA. The Cytoplasmic segment spans residues 212 to 349; it reads NSLDVLFCSW…IVRLVTAVGD (138 aa). Positions 261-281 are disordered; it reads SADHLRDGDNPPPPPPPQSDN. The chain crosses the membrane as a helical span at residues 350 to 370; that stretch reads AYGFALLLHMLTTTITLTLLA. The Extracellular portion of the chain corresponds to 371 to 382; that stretch reads YQATKVNGINVY. A helical transmembrane segment spans residues 383–403; it reads AASTIGYILYTFGQVFLFCIF. At 404–454 the chain is on the cytoplasmic side; it reads GNRLIEESTSVMEAAYSCHWYDGSEEAKTFVQIVCQQCQKAMSISGAKFFT. Residues 455–475 traverse the membrane as a helical segment; it reads VSLDLFASVLGAVVTYFMVLV. Residues 476-478 are Extracellular-facing; that stretch reads QLK.

The protein belongs to the insect chemoreceptor superfamily. Heteromeric odorant receptor channel (TC 1.A.69) family. Orco subfamily. In terms of assembly, heterodimer with conventional odorant receptors (ORs). In terms of tissue distribution, present in antennae (at protein level).

Its subcellular location is the cell membrane. Functionally, odorant coreceptor which complexes with conventional odorant receptors (ORs) to form odorant-sensing units, providing sensitive and prolonged odorant signaling and calcium permeability. Obligate coreceptor of all odorant receptors. Orco is a universal and integral part of the functional odorant receptor, involved in the dendritic localization of other olfactory receptors. Can form functional ion channels in the absence of an odor-binding odorant receptor. Plays a central role in the perception of olfactory stimuli in ants and is essential for ant social organization. Required for pheromone sensing. Also required for the development and maintenance of odorant receptor neurons (ORNs) and of antennal lobe glomeruli. This Ooceraea biroi (Clonal raider ant) protein is Odorant receptor coreceptor.